The following is a 120-amino-acid chain: Large ribosomal subunit protein bL19 (120 aa).

It belongs to the bacterial ribosomal protein bL19 family.

Functionally, this protein is located at the 30S-50S ribosomal subunit interface and may play a role in the structure and function of the aminoacyl-tRNA binding site. The protein is Large ribosomal subunit protein bL19 of Chlorobium limicola (strain DSM 245 / NBRC 103803 / 6330).